A 352-amino-acid chain; its full sequence is Putative GATA transcription factor 22 (352 aa).

The segment at 27-53 is disordered; it reads SLHHHLQQQQQQQQHFHHQASSNPSSL. Residues 33-53 are compositionally biased toward low complexity; sequence QQQQQQQQHFHHQASSNPSSL. Positions 112-119 match the Nuclear localization signal motif; that stretch reads PKKETRLK. The tract at residues 163–189 is disordered; sequence AIITTSDSSKQHTNNDQSSNLSNSERQ. Residues 165-189 are compositionally biased toward polar residues; sequence ITTSDSSKQHTNNDQSSNLSNSERQ. The GATA-type zinc finger occupies 195–249; it reads DCVIRICSDCNTTKTPLWRSGPRGPKSLCNACGIRQRKARRAAMATATATAVSGV.

It belongs to the type IV zinc-finger family. Class B subfamily. Forms heterodimers with GATA18. Expressed predominantly in leaves, and barely in stems, flowers and siliques.

Its subcellular location is the nucleus. Functionally, transcriptional regulator that specifically binds 5'-GATA-3' or 5'-GAT-3' motifs within gene promoters. Involved in the modulation of chloroplast development, growth and division in a cytokinin-dependent manner. Repressor of the gibberellic acid (GA) signaling pathway that regulates flowering and modulates greening, in a SOC1-dependent manner. Prevents the accumulation of SOC1 during flowering. Promotes chlorophyll biosynthesis throughout the plant, by regulating chlorophyll biosynthetic genes (e.g. HEMA1 and GUN4) and chloroplast localized glutamate synthase (e.g. GLU1). Involved in the regulation of sugar-sensing genes (e.g. HXK1, HXK2, STP13 and PLT6). Regulator of germination, senescence, elongation growth and flowering time. Influences also leaf starch content. In Arabidopsis thaliana (Mouse-ear cress), this protein is Putative GATA transcription factor 22.